The primary structure comprises 299 residues: Sulfate adenylyltransferase subunit 2 (299 aa).

This sequence belongs to the PAPS reductase family. CysD subfamily. Sulfate-activating enzymes, NodP and NodQ, may be physically associated.

It carries out the reaction sulfate + ATP + H(+) = adenosine 5'-phosphosulfate + diphosphate. In terms of biological role, proposed to provide activated sulfate for transfer to nod factor. The protein is Sulfate adenylyltransferase subunit 2 (nodP) of Rhizobium tropici.